Reading from the N-terminus, the 269-residue chain is 4-hydroxy-tetrahydrodipicolinate reductase (269 aa).

An NAD(+)-binding site is contributed by 11–16 (GPIGRM). Residue Lys39 coordinates NADP(+). NAD(+)-binding positions include 101–103 (GTT) and 125–128 (ASNF). The active-site Proton donor/acceptor is His158. His159 is a binding site for (S)-2,3,4,5-tetrahydrodipicolinate. Lys162 acts as the Proton donor in catalysis. A (S)-2,3,4,5-tetrahydrodipicolinate-binding site is contributed by 168-169 (GT).

It belongs to the DapB family. As to quaternary structure, homotetramer.

It is found in the cytoplasm. It carries out the reaction (S)-2,3,4,5-tetrahydrodipicolinate + NAD(+) + H2O = (2S,4S)-4-hydroxy-2,3,4,5-tetrahydrodipicolinate + NADH + H(+). The catalysed reaction is (S)-2,3,4,5-tetrahydrodipicolinate + NADP(+) + H2O = (2S,4S)-4-hydroxy-2,3,4,5-tetrahydrodipicolinate + NADPH + H(+). It functions in the pathway amino-acid biosynthesis; L-lysine biosynthesis via DAP pathway; (S)-tetrahydrodipicolinate from L-aspartate: step 4/4. In terms of biological role, catalyzes the conversion of 4-hydroxy-tetrahydrodipicolinate (HTPA) to tetrahydrodipicolinate. The sequence is that of 4-hydroxy-tetrahydrodipicolinate reductase from Buchnera aphidicola subsp. Acyrthosiphon pisum (strain APS) (Acyrthosiphon pisum symbiotic bacterium).